We begin with the raw amino-acid sequence, 396 residues long: N-terminal EF-hand calcium-binding protein 3 (396 aa).

The segment covering 14–34 (PPAPQPQPQTPRHPQLAPDPG) has biased composition (pro residues). Residues 14–36 (PPAPQPQPQTPRHPQLAPDPGPA) are disordered. The 36-residue stretch at 36–71 (AGHTLFQDVFRRADKNDDGKLSFEEFQNYFADGVLS) folds into the EF-hand domain. Ca(2+) is bound by residues Asp49, Asn51, Asp53, Lys55, and Glu60. The tract at residues 181-190 (VEAQSRLCGS) is required for interaction with APBA3. The tract at residues 197 to 220 (ALRSVSRSSTWSPGSSDTGRSSEA) is disordered. The span at 206 to 217 (TWSPGSSDTGRS) shows a compositional bias: polar residues. Positions 296–385 (LMAQRQVQVA…RAPDTLTTVF (90 aa)) constitute an ABM domain.

As to quaternary structure, interacts with the N-terminal domain of APBA2. Interacts with NEK2. Interacts with APBA3; APBA3 seems to mediate the interaction between NECAB3 and HIF1AN. Post-translationally, phosphorylated by NEK2. In terms of tissue distribution, strongly expressed in heart and skeletal muscle, moderately in brain and pancreas.

Its subcellular location is the golgi apparatus. Functionally, inhibits the interaction of APBA2 with amyloid-beta precursor protein (APP), and hence allows formation of amyloid-beta. May enhance the activity of HIF1A and thus promote glycolysis under normoxic conditions; the function requires its ABM domain and may implicate the stabilization of the interaction between HIF1AN and APBA3. The polypeptide is N-terminal EF-hand calcium-binding protein 3 (NECAB3) (Homo sapiens (Human)).